The chain runs to 222 residues: Deoxyribose-phosphate aldolase (222 aa).

Aspartate 90 functions as the Proton donor/acceptor in the catalytic mechanism. The Schiff-base intermediate with acetaldehyde role is filled by lysine 152. Lysine 181 (proton donor/acceptor) is an active-site residue.

This sequence belongs to the DeoC/FbaB aldolase family. DeoC type 1 subfamily.

It is found in the cytoplasm. The catalysed reaction is 2-deoxy-D-ribose 5-phosphate = D-glyceraldehyde 3-phosphate + acetaldehyde. The protein operates within carbohydrate degradation; 2-deoxy-D-ribose 1-phosphate degradation; D-glyceraldehyde 3-phosphate and acetaldehyde from 2-deoxy-alpha-D-ribose 1-phosphate: step 2/2. Functionally, catalyzes a reversible aldol reaction between acetaldehyde and D-glyceraldehyde 3-phosphate to generate 2-deoxy-D-ribose 5-phosphate. In Pectobacterium atrosepticum (strain SCRI 1043 / ATCC BAA-672) (Erwinia carotovora subsp. atroseptica), this protein is Deoxyribose-phosphate aldolase.